Reading from the N-terminus, the 152-residue chain is Ribosome maturation factor RimP (152 aa).

It belongs to the RimP family.

It localises to the cytoplasm. In terms of biological role, required for maturation of 30S ribosomal subunits. This chain is Ribosome maturation factor RimP, found in Paraburkholderia phymatum (strain DSM 17167 / CIP 108236 / LMG 21445 / STM815) (Burkholderia phymatum).